We begin with the raw amino-acid sequence, 185 residues long: Large ribosomal subunit protein bL25 (185 aa).

It belongs to the bacterial ribosomal protein bL25 family. CTC subfamily. As to quaternary structure, part of the 50S ribosomal subunit; part of the 5S rRNA/L5/L18/L25 subcomplex. Contacts the 5S rRNA. Binds to the 5S rRNA independently of L5 and L18.

In terms of biological role, this is one of the proteins that binds to the 5S RNA in the ribosome where it forms part of the central protuberance. The polypeptide is Large ribosomal subunit protein bL25 (Chlamydia abortus (strain DSM 27085 / S26/3) (Chlamydophila abortus)).